The sequence spans 120 residues: Acylphosphatase-1 (120 aa).

The residue at position 2 (A2) is an N-acetylalanine. Residues 8 to 98 (SCEFEVFGRV…YGYANFHIKP (91 aa)) form the Acylphosphatase-like domain. Active-site residues include R23 and N41. Positions 91 to 120 (YANFHIKPDPHENRPVHEGLGSSSSHHDSN) are disordered. Over residues 96 to 107 (IKPDPHENRPVH) the composition is skewed to basic and acidic residues.

Belongs to the acylphosphatase family.

Its subcellular location is the cytoplasm. The catalysed reaction is an acyl phosphate + H2O = a carboxylate + phosphate + H(+). This Drosophila melanogaster (Fruit fly) protein is Acylphosphatase-1 (Acyp).